We begin with the raw amino-acid sequence, 67 residues long: Vespin (67 aa).

Positions Met1–Leu21 are cleaved as a signal peptide.

In terms of tissue distribution, expressed by the venom gland.

The protein resides in the secreted. Functionally, shows contractile activity on isolated ileum smooth muscle. The protein is Vespin of Vespa magnifica (Hornet).